The following is a 401-amino-acid chain: Membrane protein UL43 homolog (401 aa).

The next 10 membrane-spanning stretches (helical) occupy residues 43–63 (FVGIGLQACVLTSSILHIDLL), 67–87 (STCLILMIISMYVLSLIRVPI), 93–113 (IVTVCRSIQALATLVAASVWV), 124–144 (LIVVTVCILFVFIAGTQISLF), 159–179 (ASLLAIIGGCVLGVSVKLVEL), 182–202 (VPIGIGIAIAIIASCQDFGLA), 259–279 (PGVIFSPAVGTHATPIIWIVL), 294–314 (YVVFCLTVGHVSAMLLEQLVI), 332–352 (AVCMVLAAFGYGVAAPLSLAF), and 379–399 (ISRWLIVCVYVAAGLCYATII).

This sequence belongs to the alphaherpesvirinae HHV-1 UL43 family.

Its subcellular location is the membrane. In Equine herpesvirus 1 (strain Ab4p) (EHV-1), this protein is Membrane protein UL43 homolog.